Reading from the N-terminus, the 212-residue chain is Leucine efflux protein (212 aa).

Helical transmembrane passes span 12–32, 49–69, 71–91, 122–142, 153–173, and 188–208; these read TYLV…LFVL, GVFI…ATLI, TTPI…LYLG, ILSL…VQFI, FFIL…FLII, and LAKV…ARLA.

Belongs to the Rht family.

It is found in the cell inner membrane. The catalysed reaction is L-leucine(in) + H(+)(out) = L-leucine(out) + H(+)(in). Leucine export is inhibited by the proton ionophore carbonyl cyanide m-chlorophenylhydrazone (CCCP). In terms of biological role, exporter of leucine. Can also transport its natural analog L-alpha-amino-n-butyric acid and some other structurally unrelated amino acids. Leucine excretion is probably driven by proton motive force. The protein is Leucine efflux protein of Escherichia coli (strain K12).